The chain runs to 292 residues: Acetylglutamate kinase (292 aa).

Residues 62–63 (GG), Arg84, and Asn188 contribute to the substrate site.

Belongs to the acetylglutamate kinase family. ArgB subfamily.

Its subcellular location is the cytoplasm. It carries out the reaction N-acetyl-L-glutamate + ATP = N-acetyl-L-glutamyl 5-phosphate + ADP. It functions in the pathway amino-acid biosynthesis; L-arginine biosynthesis; N(2)-acetyl-L-ornithine from L-glutamate: step 2/4. Catalyzes the ATP-dependent phosphorylation of N-acetyl-L-glutamate. This is Acetylglutamate kinase from Methanosarcina mazei (strain ATCC BAA-159 / DSM 3647 / Goe1 / Go1 / JCM 11833 / OCM 88) (Methanosarcina frisia).